A 286-amino-acid chain; its full sequence is MRNHQLGIYEKALAKDLSWPERLVLAKSCGFDFVEMSVDETDERLSRLDWSAAQRTSLVAAMIETGVGIPSMCLSAHRRFPFGSRDEAVRERAREIMSKAIRLARDLGIRTIQLAGYDVYYEDHDEGTRQRFAEGLAWAVEQAAASQVMLAVEIMDTAFMNSISKWKKWDEMLASPWFTVYPDVGNLSAWGNDVPAELKLGIDRIAAIHLKDTQPVTGQSPGQFRDVPFGEGCVDFVGIFKTLHKLNYRGSFLIEMWTEKAKEPVLEIIQARRWIEARMQEAGFIC.

It belongs to the L-ribulose-5-phosphate 3-epimerase family.

The enzyme catalyses L-ribulose 5-phosphate = L-xylulose 5-phosphate. Catalyzes the isomerization of L-xylulose-5-phosphate to L-ribulose-5-phosphate (Potential). May be involved in the utilization of 2,3-diketo-L-gulonate. The polypeptide is Putative L-ribulose-5-phosphate 3-epimerase SgbU (sgbU) (Escherichia coli (strain K12)).